Here is a 130-residue protein sequence, read N- to C-terminus: Cuticle protein 14 isoform a (130 aa).

A Chitin-binding type R&amp;R domain is found at 24–90 (IGNYNFGYNE…NVHTNEPGTD (67 aa)).

The protein is Cuticle protein 14 isoform a of Limulus polyphemus (Atlantic horseshoe crab).